An 847-amino-acid chain; its full sequence is MPDSEPLEPLNQESSSNTEQLKLSTTPNIPARPQTRPQKQTTTTTTVPTDQDSTTETSLEKPLDNPQDELDELAHEIEKVLSDPVIPPRPEHGSSTKSSETQTEHKEQDFEPAHPAIPQRPTNKKETIQSEVSDHKNGLESKFDLKVNEETPADSVSTDKDKVHIKPSIPTIPSRPQSRNLDSSEVDNTKPSTTASIPARPQRQSTSTQDEYKPQASNTPDIPTRPQTKTEKSVSSEELDKPGDEPSSKDQDNERYTDDSNASKSILETEKAVAQEEKKAKKSDVDNKPSEPTTSTDSSTEPAAPARGFRLPLHMQQGSGPISTSTPVAGSEAELNSLNNSNTFGDGEVTPGNSDTKATFKNDEDVENENRTDSSSFDDDMETISQDNEDGEQDRRNRQETATEENAQESEAPQFETTIIESGETEERDGDDTDSGELYSEQQQNKEKEKIVPATSTPKIPQRPPKKSSLSRATTNDSLTSLDSTSKPPKPVIPKRPTTEESLSNIEPTIPSRPATKKITSVGESQHEPIVPNRPDNKDLESSQRDTQASVKSKPPPPKPKKLSSKIAAFQQQLFNPANASSKEDVSSTGSKQPESGIRKRSTENSVLSRFGGKAIPLPGMFNPNQMPKPSISHGEETSDDREEKQESATANAPVRRTRGPRGKKLPKAVADAEVKTESRFAIESGKLWSIEFKKKIVEEKEITSTSVEDLEKPKILSENDEAGDEGKETAVENEVIDNPEIPVKDELQHDVVDVVGHPEKDVVTGLDDDDEDVPPEVNERFIKDEEISNVGVERTIASETTTEKHSTDEEEVEEEAVVDSVDIPIRRVAVNIVDSTEVQKDVEDEP.

Disordered stretches follow at residues 1–675, 704–740, and 799–818; these read MPDS…DAEV, TSTSVEDLEKPKILSENDEAGDEGKETAVENEVIDNP, and SETTTEKHSTDEEEVEEEAV. The segment covering 11–28 has biased composition (polar residues); it reads NQESSSNTEQLKLSTTPN. The span at 31-57 shows a compositional bias: low complexity; it reads ARPQTRPQKQTTTTTTVPTDQDSTTET. Basic and acidic residues-rich tracts occupy residues 72 to 81, 102 to 112, and 123 to 149; these read ELAHEIEKVL, QTEHKEQDFEP, and NKKETIQSEVSDHKNGLESKFDLKVNE. Polar residues-rich tracts occupy residues 174-183 and 189-227; these read SRPQSRNLDS and TKPSTTASIPARPQRQSTSTQDEYKPQASNTPDIPTRPQ. Composition is skewed to basic and acidic residues over residues 228–258 and 267–289; these read TKTEKSVSSEELDKPGDEPSSKDQDNERYTD and LETEKAVAQEEKKAKKSDVDNKP. Over residues 290 to 306 the composition is skewed to low complexity; it reads SEPTTSTDSSTEPAAPA. The span at 316 to 328 shows a compositional bias: polar residues; it reads QQGSGPISTSTPV. The span at 358 to 372 shows a compositional bias: basic and acidic residues; the sequence is ATFKNDEDVENENRT. Acidic residues-rich tracts occupy residues 376–392 and 423–435; these read SFDDDMETISQDNEDGE and GETEERDGDDTDS. The segment covering 474–486 has biased composition (low complexity); that stretch reads TTNDSLTSLDSTS. Positions 535–544 are enriched in basic and acidic residues; sequence PDNKDLESSQ. Polar residues predominate over residues 570 to 594; that stretch reads FQQQLFNPANASSKEDVSSTGSKQP. Residues 634–647 are compositionally biased toward basic and acidic residues; sequence HGEETSDDREEKQE. Basic residues predominate over residues 656-667; that stretch reads RRTRGPRGKKLP. Residues 809-818 show a composition bias toward acidic residues; that stretch reads DEEEVEEEAV.

It belongs to the AIM21 family.

It localises to the cytoplasm. Its subcellular location is the cytoskeleton. It is found in the actin patch. Functionally, involved in mitochondrial migration along actin filaments. This is Altered inheritance of mitochondria protein 21 (AIM21) from Candida albicans (strain WO-1) (Yeast).